The sequence spans 331 residues: UPF0324 membrane protein SA0329 (331 aa).

11 consecutive transmembrane segments (helical) span residues 9–26, 31–48, 69–88, 93–115, 122–144, 154–176, 183–202, 217–234, 247–269, 273–295, and 308–330; these read FMIG…SFLA, ILDK…AILY, LLRF…DIIG, LLAI…NKLL, ALLL…APIF, SIGI…YAIF, YGAW…LAGG, LGRV…ILIM, ISIP…VTIP, LNIL…GLNV, and LMTI…HWLY.

The protein belongs to the UPF0324 family.

Its subcellular location is the cell membrane. This Staphylococcus aureus (strain N315) protein is UPF0324 membrane protein SA0329.